The primary structure comprises 522 residues: Light-independent protochlorophyllide reductase subunit B (522 aa).

Asp36 is a binding site for [4Fe-4S] cluster. Asp274 functions as the Proton donor in the catalytic mechanism. Substrate is bound at residue Gly409–Leu410. The disordered stretch occupies residues Asp426–Ala464. Over residues Pro455–Ala464 the composition is skewed to low complexity.

Belongs to the ChlB/BchB/BchZ family. In terms of assembly, protochlorophyllide reductase is composed of three subunits; BchL, BchN and BchB. Forms a heterotetramer of two BchB and two BchN subunits. Requires [4Fe-4S] cluster as cofactor.

It carries out the reaction chlorophyllide a + oxidized 2[4Fe-4S]-[ferredoxin] + 2 ADP + 2 phosphate = protochlorophyllide a + reduced 2[4Fe-4S]-[ferredoxin] + 2 ATP + 2 H2O. The protein operates within porphyrin-containing compound metabolism; bacteriochlorophyll biosynthesis (light-independent). Its function is as follows. Component of the dark-operative protochlorophyllide reductase (DPOR) that uses Mg-ATP and reduced ferredoxin to reduce ring D of protochlorophyllide (Pchlide) to form chlorophyllide a (Chlide). This reaction is light-independent. The NB-protein (BchN-BchB) is the catalytic component of the complex. This is Light-independent protochlorophyllide reductase subunit B from Cereibacter sphaeroides (strain ATCC 17025 / ATH 2.4.3) (Rhodobacter sphaeroides).